The following is a 299-amino-acid chain: uncharacterized protein (299 aa).

The segment at 1 to 44 (MSDSNLTNPIKAFFHDEFPEQYQEPPGLQKNMKPVPDCGEKSYK) is disordered. 55–79 (LVTGGDSGIGRAAAIAYAREGADVA) contributes to the NADP(+) binding site. Position 188 (S188) interacts with substrate. Residue Y201 is the Proton acceptor of the active site.

Belongs to the short-chain dehydrogenases/reductases (SDR) family.

This is an uncharacterized protein from Bacillus subtilis (strain 168).